The sequence spans 547 residues: Chaperonin GroEL (547 aa).

Residues 30–33 (TLGP), Lys-51, 87–91 (DGTTT), Gly-415, and Asp-495 contribute to the ATP site.

Belongs to the chaperonin (HSP60) family. As to quaternary structure, forms a cylinder of 14 subunits composed of two heptameric rings stacked back-to-back. Interacts with the co-chaperonin GroES.

It is found in the cytoplasm. The enzyme catalyses ATP + H2O + a folded polypeptide = ADP + phosphate + an unfolded polypeptide.. Functionally, together with its co-chaperonin GroES, plays an essential role in assisting protein folding. The GroEL-GroES system forms a nano-cage that allows encapsulation of the non-native substrate proteins and provides a physical environment optimized to promote and accelerate protein folding. The polypeptide is Chaperonin GroEL (Shewanella halifaxensis (strain HAW-EB4)).